The primary structure comprises 179 residues: Probable F-box protein At3g25550 (179 aa).

The F-box domain maps to 19 to 55; that stretch reads IPNDDVLEEIIVRLPVKTLTRFQTVSKHWRHTIKSRN.

The sequence is that of Probable F-box protein At3g25550 from Arabidopsis thaliana (Mouse-ear cress).